Here is a 176-residue protein sequence, read N- to C-terminus: RNA 2',3'-cyclic phosphodiesterase (176 aa).

The Proton donor role is filled by His43. 2 short sequence motifs (HXTX) span residues 43 to 46 (HLTL) and 125 to 128 (HITL). His125 functions as the Proton acceptor in the catalytic mechanism.

Belongs to the 2H phosphoesterase superfamily. ThpR family. In terms of assembly, monomer.

The catalysed reaction is a 3'-end 2',3'-cyclophospho-ribonucleotide-RNA + H2O = a 3'-end 2'-phospho-ribonucleotide-RNA + H(+). Hydrolyzes RNA 2',3'-cyclic phosphodiester to an RNA 2'-phosphomonoester. In vitro, can also ligate 5' and 3' half-tRNA molecules with 2',3'-cyclic phosphate and 5'-hydroxyl termini, respectively, to the product containing the 2'-5' phosphodiester linkage. This reaction does not require ATP and is reversible. This Escherichia coli (strain K12) protein is RNA 2',3'-cyclic phosphodiesterase.